Consider the following 907-residue polypeptide: Androgen receptor (907 aa).

The segment at 1-545 (MEVQLGLGRV…PIDYYFPPQK (545 aa)) is modulating. The interval 1 to 574 (MEVQLGLGRV…GSCKVFFKRA (574 aa)) is interaction with ZNF318. Disordered regions lie at residues 36 to 152 (NPGP…LSLL) and 200 to 231 (QQQE…YLGG). Low complexity predominate over residues 55 to 76 (QQQQQQQQQQETSPRQQQQQQQ). A Phosphoserine; by CDK9 modification is found at Ser-67. A Phosphoserine modification is found at Ser-81. Over residues 123–134 (TSATGKGLQQQQ) the composition is skewed to polar residues. The span at 200–224 (QQQEVVSEGSSSGRAREAAGASTSS) shows a compositional bias: low complexity. Position 228 is a phosphotyrosine; by CSK (Tyr-228). The residue at position 261 (Ser-261) is a Phosphoserine. Tyr-272 carries the phosphotyrosine; by CSK and TNK2 modification. 4 positions are modified to phosphotyrosine; by CSK: Tyr-310, Tyr-349, Tyr-360, and Tyr-365. Tyr-366 bears the Phosphotyrosine; by CSK and TNK2 mark. Residue Lys-389 forms a Glycyl lysine isopeptide (Lys-Gly) (interchain with G-Cter in SUMO) linkage. Tyr-396 carries the phosphotyrosine; by CSK modification. Lys-508 is covalently cross-linked (Glycyl lysine isopeptide (Lys-Gly) (interchain with G-Cter in SUMO)). Phosphotyrosine; by CSK occurs at positions 522 and 539. The interval 539 to 906 (YYFPPQKTCL…GKVKPIYFHT (368 aa)) is interaction with LPXN. A DNA-binding region (nuclear receptor) is located at residues 546 to 619 (TCLICGDEAS…AGMTLGARKL (74 aa)). NR C4-type zinc fingers lie at residues 547 to 567 (CLIC…CGSC) and 583 to 607 (CASR…LRKC). Positions 559–649 (YGALTCGSCK…TEEPTQKLTV (91 aa)) are interaction with HIPK3. The interval 579–906 (QKYLCASRND…GKVKPIYFHT (328 aa)) is interaction with CCAR1. Residues 612–906 (MTLGARKLKK…GKVKPIYFHT (295 aa)) form an interaction with KAT7 region. At Ser-638 the chain carries Phosphoserine; by STK4/MST1. An NR LBD domain is found at 656-887 (ECQPIFLNVL…DFPEMMAEII (232 aa)). The 17beta-hydroxy-5alpha-androstan-3-one site is built by Asn-693 and Arg-740. Residues Lys-833 and Lys-835 each participate in a glycyl lysine isopeptide (Lys-Gly) (interchain with G-Cter in ubiquitin) cross-link. Thr-865 is a binding site for 17beta-hydroxy-5alpha-androstan-3-one. Tyr-903 carries the phosphotyrosine; by CSK modification.

This sequence belongs to the nuclear hormone receptor family. NR3 subfamily. As to quaternary structure, binds DNA as a homodimer. Part of a ternary complex containing AR, EFCAB6/DJBP and PARK7. Interacts with HIPK3 and NR0B2 in the presence of androgen. The ligand binding domain interacts with KAT7/HBO1 in the presence of dihydrotestosterone. Interacts with EFCAB6/DJBP, PQBP1, RANBP9, RBAK, SPDEF, SRA1, TGFB1I1 and RREB1. Interacts with ZMIZ1/ZIMP10 and ZMIZ2/ZMIP7 which both enhance its transactivation activity. Interacts with SLC30A9 and RAD54L2/ARIP4. Interacts with MACROD1 (via macro domain). Interacts via the ligand-binding domain with LXXLL and FXXLF motifs from NCOA1, NCOA2, NCOA3 and MAGEA11. Interacts (via nuclear receptor DNA binding domain and nuclear receptor ligand binding domain) with NCOA4. The AR N-terminal poly-Gln region binds Ran resulting in enhancement of AR-mediated transactivation. Ran-binding decreases as the poly-Gln length increases. Interacts with HIP1 (via coiled coil domain). Interacts (via ligand-binding domain) with TRIM68. Interacts with TNK2. Interacts with USP26. Interacts with RNF6. Interacts (regulated by RNF6 probably through polyubiquitination) with RNF14; regulates AR transcriptional activity. Interacts with PRMT2 and TRIM24. Interacts with RACK1. Interacts with RANBP10; this interaction enhances dihydrotestosterone-induced AR transcriptional activity. Interacts with PRPF6 in a hormone-independent way; this interaction enhances dihydrotestosterone-induced AR transcriptional activity. Interacts with STK4/MST1. Interacts with ZIPK/DAPK3. Interacts with LPXN. Interacts with MAK. Part of a complex containing AR, MAK and NCOA3. Interacts with CRY1. Interacts with CCAR1 and GATA2. Interacts with ZNF318. Interacts with BUD31. Interacts with ARID4A. Interacts with ARID4B. Interacts (via NR LBD domain) with ZBTB7A; the interaction is direct and androgen-dependent. Interacts with NCOR1. Interacts with NCOR2. Interacts witH CRY2 in a ligand-dependent manner. In terms of processing, phosphorylated in prostate cancer cells in response to several growth factors including EGF. Phosphorylation is induced by c-Src kinase (CSK). Tyr-522 is one of the major phosphorylation sites and an increase in phosphorylation and Src kinase activity is associated with prostate cancer progression. Phosphorylation by TNK2 enhances the DNA-binding and transcriptional activity. Phosphorylation at Ser-67 by CDK9 regulates AR promoter selectivity and cell growth. Post-translationally, sumoylated on Lys-389 (major) and Lys-508. Ubiquitinated. Deubiquitinated by USP26. 'Lys-6' and 'Lys-27'-linked polyubiquitination by RNF6 modulates AR transcriptional activity and specificity. Palmitoylated by ZDHHC7 and ZDHHC21. Palmitoylation is required for plasma membrane targeting and for rapid intracellular signaling via ERK and AKT kinases and cAMP generation.

Its subcellular location is the nucleus. It is found in the cytoplasm. In terms of biological role, steroid hormone receptors are ligand-activated transcription factors that regulate eukaryotic gene expression and affect cellular proliferation and differentiation in target tissues. Transcription factor activity is modulated by bound coactivator and corepressor proteins like ZBTB7A that recruits NCOR1 and NCOR2 to the androgen response elements/ARE on target genes, negatively regulating androgen receptor signaling and androgen-induced cell proliferation. Transcription activation is also down-regulated by NR0B2. Activated, but not phosphorylated, by HIPK3 and ZIPK/DAPK3. This chain is Androgen receptor (AR), found in Canis lupus familiaris (Dog).